The sequence spans 425 residues: Enolase (425 aa).

Position 162 (Gln-162) interacts with (2R)-2-phosphoglycerate. Glu-204 acts as the Proton donor in catalysis. Asp-241, Glu-284, and Asp-311 together coordinate Mg(2+). (2R)-2-phosphoglycerate is bound by residues Lys-336, Arg-365, Ser-366, and Lys-387. Catalysis depends on Lys-336, which acts as the Proton acceptor.

Belongs to the enolase family. Mg(2+) is required as a cofactor.

Its subcellular location is the cytoplasm. The protein resides in the secreted. It localises to the cell surface. The enzyme catalyses (2R)-2-phosphoglycerate = phosphoenolpyruvate + H2O. The protein operates within carbohydrate degradation; glycolysis; pyruvate from D-glyceraldehyde 3-phosphate: step 4/5. In terms of biological role, catalyzes the reversible conversion of 2-phosphoglycerate (2-PG) into phosphoenolpyruvate (PEP). It is essential for the degradation of carbohydrates via glycolysis. The chain is Enolase from Brucella abortus (strain S19).